The chain runs to 236 residues: Small ribosomal subunit protein mS41 (236 aa).

The protein belongs to the mitochondrion-specific ribosomal protein mS41 family. As to quaternary structure, component of the mitochondrial small ribosomal subunit (mt-SSU). Mature N.crassa 74S mitochondrial ribosomes consist of a small (37S) and a large (54S) subunit. The 37S small subunit contains a 16S ribosomal RNA (16S mt-rRNA) and 32 different proteins. The 54S large subunit contains a 23S rRNA (23S mt-rRNA) and 42 different proteins.

Its subcellular location is the mitochondrion. In terms of biological role, component of the mitochondrial ribosome (mitoribosome), a dedicated translation machinery responsible for the synthesis of mitochondrial genome-encoded proteins, including at least some of the essential transmembrane subunits of the mitochondrial respiratory chain. The mitoribosomes are attached to the mitochondrial inner membrane and translation products are cotranslationally integrated into the membrane. The polypeptide is Small ribosomal subunit protein mS41 (fyv4) (Neurospora crassa (strain ATCC 24698 / 74-OR23-1A / CBS 708.71 / DSM 1257 / FGSC 987)).